The primary structure comprises 189 residues: Heme-binding protein 1 (189 aa).

The protein belongs to the HEBP family. As to quaternary structure, monomer.

It is found in the cytoplasm. Functionally, may bind free porphyrinogens that may be present in the cell and thus facilitate removal of these potentially toxic compound. Binds with a high affinity to one molecule of heme or porphyrins. It binds metalloporphyrins, free porphyrins and N-methylprotoporphyrin with similar affinities. The chain is Heme-binding protein 1 (HEBP1) from Sus scrofa (Pig).